Here is a 670-residue protein sequence, read N- to C-terminus: Probable potassium transport system protein Kup (670 aa).

Residues 1–42 (MSQIPSPNDPPPAGAVPTSGAPAGPSATPAPSPTAGFSLPEH) form a disordered region. A compositionally biased stretch (low complexity) spans 15–35 (AVPTSGAPAGPSATPAPSPTA). The next 12 helical transmembrane spans lie at 51 to 71 (LAALAVGALGVVYGDIGTSPL), 91 to 111 (VLGVLSLVFWAMTFVVTFKYM), 144 to 164 (VLLMLGLFGAALLYGDGIITP), 180 to 200 (PAMERVVVPATVVILVFLFLF), 208 to 228 (VGAVFGPIMLVWFATIAVLGV), 254 to 274 (GWHGFLVLGGVVLVITGGEAL), 290 to 310 (WLGLAMPALLLNYLGQGALLL), 322 to 342 (LLAPEWALYPTIAIATAAAIV), 380 to 400 (IYLPEVNWMLGTACVALVLGF), 406 to 426 (LASAYGIAVTGTMIVTTLLFH), 440 to 460 (AWPLTVLFLTVDASFFLANVV), and 464 to 484 (DGGWFPIAAAALVFTLMSTWK).

It belongs to the HAK/KUP transporter (TC 2.A.72) family.

The protein resides in the cell inner membrane. The enzyme catalyses K(+)(in) + H(+)(in) = K(+)(out) + H(+)(out). In terms of biological role, transport of potassium into the cell. Likely operates as a K(+):H(+) symporter. This is Probable potassium transport system protein Kup from Anaeromyxobacter dehalogenans (strain 2CP-C).